The chain runs to 86 residues: Large ribosomal subunit protein bL31B (86 aa).

It belongs to the bacterial ribosomal protein bL31 family. Type B subfamily. As to quaternary structure, part of the 50S ribosomal subunit.

The chain is Large ribosomal subunit protein bL31B from Streptococcus pyogenes serotype M1.